The following is a 272-amino-acid chain: Oligodendrocyte transcription factor 3 (272 aa).

Low complexity predominate over residues 1 to 14; sequence MNSDSSSVSSRASS. The segment at 1–71 is disordered; it reads MNSDSSSVSS…KAAGESSKYK (71 aa). Residues 24 to 33 are compositionally biased toward basic residues; the sequence is DHHHRHHHHQ. The segment covering 36-46 has biased composition (polar residues); it reads RLNSVSSTQGD. Residues 68 to 89 adopt a coiled-coil conformation; that stretch reads SKYKIKKQLSEQDLQQLRLKIN. A bHLH domain is found at 83–137; it reads QLRLKINGRERKRMHDLNLAMDGLREVMPYAHGPSVRKLSKIATLLLARNYILML.

It localises to the nucleus. In terms of biological role, may determine the distinct specification program of class A neurons in the dorsal part of the spinal cord and suppress specification of class B neurons. The polypeptide is Oligodendrocyte transcription factor 3 (OLIG3) (Homo sapiens (Human)).